A 22-amino-acid polypeptide reads, in one-letter code: GMASKAGSVLGKVAKVALKAAL.

Position 22 is a leucine amide (Leu-22).

In terms of tissue distribution, expressed by the skin glands.

It is found in the secreted. In terms of biological role, antimicrobial peptide. In Xenopus ruwenzoriensis (Uganda clawed frog), this protein is Peptide PGLa-R1.